Consider the following 417-residue polypeptide: Calreticulin (417 aa).

An N-terminal signal peptide occupies residues 1 to 17 (MLLPVPLLLGLLGLAAA). An N-domain region spans residues 18–197 (DPTVYFKEQF…NSQVESGSLE (180 aa)). Residue Gln-26 coordinates Ca(2+). Position 48 is an N6-acetyllysine (Lys-48). Residues Lys-62 and Lys-64 each coordinate Ca(2+). Position 64 is an N6-(2-hydroxyisobutyryl)lysine (Lys-64). Residues Tyr-109, Lys-111, Tyr-128, and Asp-135 each coordinate an alpha-D-glucoside. An intrachain disulfide couples Cys-137 to Cys-163. Lys-159 carries the N6-acetyllysine modification. An N-linked (GlcNAc...) asparagine glycan is attached at Asn-179. The 1-1 repeat unit spans residues 191 to 202 (VESGSLEDDWDF). Residues 191–255 (VESGSLEDDW…DAKKPEDWDE (65 aa)) are 4 X approximate repeats. Positions 193–270 (SGSLEDDWDF…WEPPVIQNPE (78 aa)) are disordered. Residues 198–308 (DDWDFLPPKK…YSPDSNIYAY (111 aa)) are P-domain. Over residues 207-251 (KIKDPDAAKPEDWDDRAKIDDPTDSKPEDWDKPEHIPDPDAKKPE) the composition is skewed to basic and acidic residues. At Lys-209 the chain carries N6-acetyllysine. 6 repeat units span residues 210 to 221 (DPDAAKPEDWDD), 227 to 238 (DPTDSKPEDWDK), 244 to 255 (DPDAKKPEDWDE), 259 to 269 (GEWEPPVIQNP), 273 to 283 (GEWKPRQIDNP), and 287 to 297 (GIWIHPEIDNP). The interaction with PPIB stretch occupies residues 237–270 (DKPEHIPDPDAKKPEDWDEEMDGEWEPPVIQNPE). Over residues 252 to 261 (DWDEEMDGEW) the composition is skewed to acidic residues. The segment at 259–297 (GEWEPPVIQNPEYKGEWKPRQIDNPEYKGIWIHPEIDNP) is 3 X approximate repeats. A C-domain region spans residues 309–417 (ENFAVLGLDL…AAAGQAKDEL (109 aa)). An alpha-D-glucoside is bound at residue Asp-317. Position 328 (Asp-328) interacts with Ca(2+). Residues 350–417 (TKAAEKQMKD…AAAGQAKDEL (68 aa)) form a disordered region. Positions 352 to 378 (AAEKQMKDKQDEEQRLHEEEEEKKGKE) are enriched in basic and acidic residues. Positions 379–408 (EEEADKDDDEDKDEDEEDEDEKEEEEEEDA) are enriched in acidic residues. The Prevents secretion from ER motif lies at 414–417 (KDEL).

This sequence belongs to the calreticulin family. As to quaternary structure, monomer. Component of an EIF2 complex at least composed of CELF1/CUGBP1, CALR, CALR3, EIF2S1, EIF2S2, HSP90B1 and HSPA5. Interacts with PDIA3/ERp57 and SPACA9. Interacts with TRIM21. Interacts with NR3C1. Interacts with PPIB. Interacts (via P-domain) with PDIA5. Interacts with GABARAP. Interacts with CLCC1.

It localises to the endoplasmic reticulum lumen. It is found in the cytoplasm. The protein localises to the cytosol. The protein resides in the secreted. Its subcellular location is the extracellular space. It localises to the extracellular matrix. It is found in the cell surface. The protein localises to the sarcoplasmic reticulum lumen. The protein resides in the cytoplasmic vesicle. Its subcellular location is the secretory vesicle. It localises to the cortical granule. It is found in the cytolytic granule. Calcium-binding chaperone that promotes folding, oligomeric assembly and quality control in the endoplasmic reticulum (ER) via the calreticulin/calnexin cycle. This lectin interacts transiently with almost all of the monoglucosylated glycoproteins that are synthesized in the ER. Interacts with the DNA-binding domain of NR3C1 and mediates its nuclear export. Involved in maternal gene expression regulation. May participate in oocyte maturation via the regulation of calcium homeostasis. Present in the cortical granules of non-activated oocytes, is exocytosed during the cortical reaction in response to oocyte activation and might participate in the block to polyspermy. This chain is Calreticulin (CALR), found in Bos taurus (Bovine).